A 504-amino-acid polypeptide reads, in one-letter code: 26S proteasome non-ATPase regulatory subunit 3 (504 aa).

Residues Ala254 to Asp434 form the PCI domain. A disordered region spans residues Lys485–Phe504. Residues Glu494 to Phe504 show a composition bias toward acidic residues.

Belongs to the proteasome subunit S3 family. In terms of assembly, the 26S proteasome is composed of a core protease, known as the 20S proteasome, capped at one or both ends by the 19S regulatory complex (RC). The RC is composed of at least 18 different subunits in two subcomplexes, the base and the lid, which form the portions proximal and distal to the 20S proteolytic core, respectively.

In terms of biological role, acts as a regulatory subunit of the 26 proteasome which is involved in the ATP-dependent degradation of ubiquitinated proteins. The sequence is that of 26S proteasome non-ATPase regulatory subunit 3 (psmD3) from Dictyostelium discoideum (Social amoeba).